The following is a 137-amino-acid chain: Large-conductance mechanosensitive channel (137 aa).

2 consecutive transmembrane segments (helical) span residues 10–30 (FAMRGNVVDLAVGVIIGAAFG) and 76–96 (GVFIQNVFDFVIVAFAIFVAI).

It belongs to the MscL family. Homopentamer.

The protein resides in the cell inner membrane. Channel that opens in response to stretch forces in the membrane lipid bilayer. May participate in the regulation of osmotic pressure changes within the cell. The chain is Large-conductance mechanosensitive channel from Salmonella typhimurium (strain LT2 / SGSC1412 / ATCC 700720).